We begin with the raw amino-acid sequence, 327 residues long: GMP reductase (327 aa).

Cys176 acts as the Thioimidate intermediate in catalysis. Position 205-228 (205-228) interacts with NADP(+); the sequence is IIADGGIRTHGDIAKSIRFGASMV.

It belongs to the IMPDH/GMPR family. GuaC type 2 subfamily.

The catalysed reaction is IMP + NH4(+) + NADP(+) = GMP + NADPH + 2 H(+). Catalyzes the irreversible NADPH-dependent deamination of GMP to IMP. It functions in the conversion of nucleobase, nucleoside and nucleotide derivatives of G to A nucleotides, and in maintaining the intracellular balance of A and G nucleotides. The sequence is that of GMP reductase from Streptococcus suis (strain 05ZYH33).